The following is a 1174-amino-acid chain: Male determiner protein Mdmd(II) (1174 aa).

Over residues Met1 to Pro15 the composition is skewed to basic and acidic residues. 3 disordered regions span residues Met1–Arg51, Lys80–Glu109, and Lys136–Ser259. Positions Ser16–Ser35 are enriched in low complexity. The segment covering Lys36–Leu47 has biased composition (polar residues). Positions Lys80–Ser92 are enriched in basic and acidic residues. The span at Ile93–Asp102 shows a compositional bias: polar residues. Over residues Leu138–Ser153 the composition is skewed to low complexity. Residues His183–Asn200 show a composition bias toward basic and acidic residues. Basic residues predominate over residues Arg201–Glu223. The span at Arg235–Ser259 shows a compositional bias: basic and acidic residues. One can recognise an MIF4G domain in the interval Lys348–Gly531. The segment covering Asp597–Ser608 has biased composition (low complexity). The disordered stretch occupies residues Asp597–Asp616. An MI domain is found at Ala641–Leu757. Residues Ser840–Pro857 are compositionally biased toward low complexity. Disordered stretches follow at residues Ser840–Lys1045 and Arg1095–Arg1133. Basic residues predominate over residues Lys869–Lys909. Residues Arg910–Leu924 are compositionally biased toward basic and acidic residues. The segment covering Ser926–Asp957 has biased composition (low complexity). Basic residues predominate over residues Lys963–Lys1001. A compositionally biased stretch (low complexity) spans Ser1010–Ser1020. Positions Arg1034–Lys1045 are enriched in basic residues. The span at Arg1095 to Arg1118 shows a compositional bias: basic and acidic residues. Over residues Arg1119 to Asn1130 the composition is skewed to basic residues.

Belongs to the CWC22 family. As to quaternary structure, component of the spliceosome C complex.

Its subcellular location is the nucleus speckle. Its function is as follows. Male determiner protein (M-factor) that controls male somatic sexual differentiation. Acts as a dominant factor that regulates the mRNA splicing of transformer (tra) and doublesex (dsx) transcripts and promotes expression of male splice forms of tra and dsx. Probably acts as a component of the spliceosome C complex required for mRNA splicing factor and exon-junction complex (EJC) assembly. Hinders eIF4AIII from non-specifically binding RNA and escorts it to the splicing machinery to promote EJC assembly on mature mRNAs. The chain is Male determiner protein Mdmd(II) from Musca domestica (House fly).